The chain runs to 441 residues: Actin-related protein 4 (441 aa).

Positions 48 to 73 (VDVDSTKTNSNSEDSKTESEKEKSKR) are disordered. Residues 60–70 (EDSKTESEKEK) are compositionally biased toward basic and acidic residues.

Belongs to the actin family. ARP4 subfamily. As to quaternary structure, component of the SWR1 chromatin-remodeling complex and of the NuA4 histone acetyltransferase complex. Interacts with the SWI/SNF complex. Interacts with EAF1A and EAF1B. Mostly expressed in flowers, and, to a lower extent, in roots, seedlings, leaves and siliques (at protein level).

The protein localises to the nucleus. The protein resides in the cytoplasm. Its function is as follows. Involved in several developmental processes including organization of plant organs, flowering time, anther development, flower senescence and fertility, probably by regulating the chromatin structure. The polypeptide is Actin-related protein 4 (Arabidopsis thaliana (Mouse-ear cress)).